A 409-amino-acid chain; its full sequence is PPE family protein PPE32 (409 aa).

It belongs to the mycobacterial PPE family. Interacts with host Toll-like receptor 2 (TLR2).

The protein resides in the secreted. It localises to the cell wall. The protein localises to the cell surface. Functionally, virulence factor that modulates the production of host cytokines. The protein is PPE family protein PPE32 of Mycobacterium tuberculosis (strain CDC 1551 / Oshkosh).